We begin with the raw amino-acid sequence, 165 residues long: uncharacterized protein (165 aa).

Positions 1 to 38 (MFTVKEKNRQELEEELNDLEFQIYRMQENMKDLSKDAK) form a coiled coil.

This is an uncharacterized protein from Bacillus subtilis (strain 168).